Here is a 390-residue protein sequence, read N- to C-terminus: Small ribosomal subunit protein uS9m (390 aa).

Positions 368-390 (PRIRERKKPGQEGARRKFTWKKR) are disordered.

The protein belongs to the universal ribosomal protein uS9 family. In terms of assembly, component of the mitochondrial ribosome small subunit (28S) which comprises a 12S rRNA and about 30 distinct proteins.

Its subcellular location is the mitochondrion. This is Small ribosomal subunit protein uS9m (Mrps9) from Mus musculus (Mouse).